Consider the following 421-residue polypeptide: Enolase 1 (421 aa).

Residue Q164 participates in (2R)-2-phosphoglycerate binding. Catalysis depends on E206, which acts as the Proton donor. Mg(2+)-binding residues include D243, E287, and D314. Positions 339, 368, 369, and 390 each coordinate (2R)-2-phosphoglycerate. K339 serves as the catalytic Proton acceptor.

The protein belongs to the enolase family. In terms of assembly, component of the RNA degradosome, a multiprotein complex involved in RNA processing and mRNA degradation. It depends on Mg(2+) as a cofactor.

Its subcellular location is the cytoplasm. It is found in the secreted. It localises to the cell surface. It carries out the reaction (2R)-2-phosphoglycerate = phosphoenolpyruvate + H2O. It participates in carbohydrate degradation; glycolysis; pyruvate from D-glyceraldehyde 3-phosphate: step 4/5. Its function is as follows. Catalyzes the reversible conversion of 2-phosphoglycerate (2-PG) into phosphoenolpyruvate (PEP). It is essential for the degradation of carbohydrates via glycolysis. The chain is Enolase 1 from Methylococcus capsulatus (strain ATCC 33009 / NCIMB 11132 / Bath).